The sequence spans 472 residues: Ribulose bisphosphate carboxylase large chain (472 aa).

Residues asparagine 115 and threonine 165 each coordinate substrate. Lysine 167 acts as the Proton acceptor in catalysis. A substrate-binding site is contributed by lysine 169. Positions 193, 195, and 196 each coordinate Mg(2+). Lysine 193 carries the N6-carboxylysine modification. Catalysis depends on histidine 286, which acts as the Proton acceptor. The substrate site is built by arginine 287, histidine 319, and serine 371.

The protein belongs to the RuBisCO large chain family. Type I subfamily. As to quaternary structure, heterohexadecamer of 8 large chains and 8 small chains. It depends on Mg(2+) as a cofactor.

It catalyses the reaction 2 (2R)-3-phosphoglycerate + 2 H(+) = D-ribulose 1,5-bisphosphate + CO2 + H2O. The catalysed reaction is D-ribulose 1,5-bisphosphate + O2 = 2-phosphoglycolate + (2R)-3-phosphoglycerate + 2 H(+). RuBisCO catalyzes two reactions: the carboxylation of D-ribulose 1,5-bisphosphate, the primary event in carbon dioxide fixation, as well as the oxidative fragmentation of the pentose substrate. Both reactions occur simultaneously and in competition at the same active site. This is Ribulose bisphosphate carboxylase large chain from Solemya velum gill symbiont.